Reading from the N-terminus, the 192-residue chain is Soluble inorganic pyrophosphatase 2 (192 aa).

Positions 38, 52, and 64 each coordinate substrate. The Mg(2+) site is built by aspartate 74, aspartate 79, and aspartate 111. A substrate-binding site is contributed by tyrosine 148.

As to quaternary structure, monomer. The cofactor is Mg(2+). The N-terminus is blocked.

It is found in the mitochondrion. The catalysed reaction is diphosphate + H2O = 2 phosphate + H(+). The sequence is that of Soluble inorganic pyrophosphatase 2 (ppa2) from Chlamydomonas reinhardtii (Chlamydomonas smithii).